The chain runs to 100 residues: Apolipoprotein C-II (100 aa).

Residues 1–22 form the signal peptide; it reads MGSRFLLALFLVLLVLGCEVQA. A lipid binding region spans residues 66–74; it reads SVDEKLRDM. Residues 78–100 form a lipoprotein lipase cofactor region; the sequence is SSAAMTTYASIFTDQIFTLLKGE.

It belongs to the apolipoprotein C2 family. In terms of processing, proapolipoprotein C-II is synthesized as a sialic acid containing glycoprotein which is subsequently desialylated prior to its proteolytic processing. Proapolipoprotein C-II, the major form found in plasma undergoes proteolytic cleavage of its N-terminal hexapeptide to generate the mature form apolipoprotein C-II, which occurs as the minor form in plasma.

It localises to the secreted. In terms of biological role, component of chylomicrons, very low-density lipoproteins (VLDL), low-density lipoproteins (LDL), and high-density lipoproteins (HDL) in plasma. Plays an important role in lipoprotein metabolism as an activator of lipoprotein lipase. The protein is Apolipoprotein C-II (APOC2) of Bramus lutescens (Transcaucasian mole vole).